A 25-amino-acid polypeptide reads, in one-letter code: GWASKIAQTLGKMAKVGLQELIQPK.

In terms of tissue distribution, expressed by the skin glands.

Its subcellular location is the secreted. Antimicrobial peptide. This chain is Xenoposin precursor fragment BM3, found in Xenopus boumbaensis (Mawa clawed frog).